Reading from the N-terminus, the 329-residue chain is DGAT1/2-independent enzyme synthesizing storage lipids (329 aa).

At 1–50 (MIDNNQTCAAGQDSVPYVTCMIYVLEEWLGVEQLEDYLNFANHLLWVFTP) the chain is on the lumenal side. Asparagine 5 carries N-linked (GlcNAc...) asparagine glycosylation. A helical transmembrane segment spans residues 51-71 (LILLILPYFTIFLLYLTIIFL). Topologically, residues 72–120 (HIYKRKNVLKEAYSHNLWDGARKTVATLWDGHAAVWHGYEVHGMEKIPE) are cytoplasmic. A helical membrane pass occupies residues 121–141 (GAALIIFYHGAIPIDFYYFMA). Residue histidine 129 is part of the active site. The Lumenal portion of the chain corresponds to 142–329 (KIFIQKGRTC…DRFHKEQKAH (188 aa)).

The protein belongs to the diacylglycerol acyltransferase family. Highly divergent. In terms of tissue distribution, widely expressed, with highest level in the brain, followed by lung and duodenum, and lowest levels in tongue, testis, skin and ileum.

The protein localises to the endoplasmic reticulum membrane. It catalyses the reaction a 1,2-diacylglycerol + a 1,2-diacyl-sn-glycero-3-phosphocholine = a triacylglycerol + a 1-acyl-sn-glycero-3-phosphocholine. The enzyme catalyses a 1-O-alkyl-2-acyl-sn-glycero-3-phosphocholine + a 1,2-diacylglycerol = a 1-O-alkyl-sn-glycero-3-phosphocholine + a triacylglycerol. The catalysed reaction is a 2-acylglycerol + an acyl-CoA = a 1,2-diacylglycerol + CoA. It carries out the reaction an acyl-CoA + a 1,2-diacyl-sn-glycerol = a triacyl-sn-glycerol + CoA. It catalyses the reaction 2-(9Z-octadecenoyl)-glycerol + (9Z)-octadecenoyl-CoA = 1,2-di-(9Z-octadecenoyl)-glycerol + CoA. The enzyme catalyses 1,2-di-(9Z-octadecenoyl)-sn-glycerol + (9Z)-octadecenoyl-CoA = 1,2,3-tri-(9Z-octadecenoyl)-glycerol + CoA. Its activity is regulated as follows. Acyltransferase activity is specifically inhibited by TMX1 at the endoplasmic reticulum, restricting accumulation of triacylglycerol. Catalytic subunit of the alternative triglyceride biosynthesis pathway, which mediates formation of triacylglycerol from diacylglycerol and membrane phospholipids. Synthesizes triacylglycerol at the expense of membrane phospholipids, such as phosphatidylcholine (PC) and its ether-linked form (ePC), thereby altering the composition of membranes. The alternative triglyceride biosynthesis pathway is probably required to provide the energy required for rapid growth when fuel sources are limiting. It maintains mitochondrial function during periods of extracellular lipid starvation. Can also use acyl-CoA as donor: acts as a acyl-CoA:monoacylglycerol acyltransferase (MGAT), but also shows acyl-CoA:diacylglycerol acyltransferase (DGAT) activity. The polypeptide is DGAT1/2-independent enzyme synthesizing storage lipids (Mus musculus (Mouse)).